Here is a 564-residue protein sequence, read N- to C-terminus: Diacylglycerol kinase epsilon (564 aa).

Residues 20–40 (LVLWTLCSVLLPVFITLWCSL) form a helical membrane-spanning segment. Phorbol-ester/DAG-type zinc fingers lie at residues 57–106 (KHCW…RFPC) and 121–174 (PHHW…SEKC). A DAGKc domain is found at 212–353 (KQWTPLIILA…LDRWKVQVTN (142 aa)).

The protein belongs to the eukaryotic diacylglycerol kinase family. Highly expressed in brain and heart. In brain, highly expressed in Purkinje cells of the cerebellum, pyramidal cells of the hippocampus, mitral cells of the olfactory bulb, and neurons of the substantia nigra. Lower expression in neurons of the thalamus, superior olive, and lateral reticular nucleus is also detected. Expressed in platelets.

The protein resides in the membrane. Its subcellular location is the cytoplasm. The enzyme catalyses a 1,2-diacyl-sn-glycerol + ATP = a 1,2-diacyl-sn-glycero-3-phosphate + ADP + H(+). The catalysed reaction is 1-hexadecanoyl-2-(5Z,8Z,11Z,14Z-eicosatetraenoyl)-sn-glycerol + ATP = 1-hexadecanoyl-2-(5Z,8Z,11Z,14Z-eicosatetraenoyl)-sn-glycero-3-phosphate + ADP + H(+). It carries out the reaction 1-octadecanoyl-2-(5Z,8Z,11Z,14Z-eicosatetraenoyl)-sn-glycerol + ATP = 1-octadecanoyl-2-(5Z,8Z,11Z,14Z-eicosatetraenoyl)-sn-glycero-3-phosphate + ADP + H(+). It catalyses the reaction 1-eicosanoyl-2-(5Z,8Z,11Z,14Z)-eicosatetraenoyl-sn-glycerol + ATP = 1-eicosanoyl-2-(5Z,8Z,11Z,14Z)-eicosatetraenoyl-sn-glycero-3-phosphate + ADP + H(+). The enzyme catalyses 1,2-di-(5Z,8Z,11Z,14Z)-eicosatetraenoyl-sn-glycerol + ATP = 1,2-di-(5Z,8Z,11Z,14Z)-eicosatetraenoyl-sn-glycero-3-phosphate + ADP + H(+). The catalysed reaction is 1-octadecanoyl-2-(9Z,12Z)-octadecadienoyl-sn-glycerol + ATP = 1-octadecanoyl-2-(9Z,12Z-octadecadienoyl)-sn-glycero-3-phosphate + ADP + H(+). It carries out the reaction 1,2-di-(9Z,12Z-octadecadienoyl)-sn-glycerol + ATP = 1,2-di-(9Z,12Z-octadecadienoyl)-sn-glycero-3-phosphate + ADP + H(+). It catalyses the reaction 1,2-di-(9Z-octadecenoyl)-sn-glycerol + ATP = 1,2-di-(9Z-octadecenoyl)-sn-glycero-3-phosphate + ADP + H(+). It functions in the pathway lipid metabolism; glycerolipid metabolism. Membrane-bound diacylglycerol kinase that converts diacylglycerol/DAG into phosphatidic acid/phosphatidate/PA and regulates the respective levels of these two bioactive lipids. Thereby, acts as a central switch between the signaling pathways activated by these second messengers with different cellular targets and opposite effects in numerous biological processes. Also plays an important role in the biosynthesis of complex lipids. Displays specificity for diacylglycerol substrates with an arachidonoyl acyl chain at the sn-2 position, with the highest activity toward 1-octadecanoyl-2-(5Z,8Z,11Z,14Z-eicosatetraenoyl)-sn-glycerol the main diacylglycerol intermediate within the phosphatidylinositol turnover cycle. Can also phosphorylate diacylglycerol substrates with a linoleoyl acyl chain at the sn-2 position but much less efficiently. The sequence is that of Diacylglycerol kinase epsilon (Dgke) from Mus musculus (Mouse).